The sequence spans 147 residues: Hemoglobin subunit gamma (147 aa).

The 145-residue stretch at 3-147 folds into the Globin domain; it reads NFTAEDKAAI…VASALGSRYH (145 aa). Heme b contacts are provided by H64 and H93.

The protein belongs to the globin family. As to quaternary structure, heterotetramer of two alpha chains and two gamma chains in fetal hemoglobin (Hb F). In terms of tissue distribution, red blood cells.

Its function is as follows. Gamma chains make up the fetal hemoglobin F, in combination with alpha chains. This chain is Hemoglobin subunit gamma (HBG), found in Aotus azarae (Azara's night monkey).